The sequence spans 182 residues: MDSSRILRYEGRLDFGSLRARRIRAESEIPAVVYGKESDVLHIKIKSSEFNNKFAKFTDNTVLILSDGKIEKCVFIKDVSENLTKRLIYHVDFYEVDKTKDIERDIAIKFVGASVGVKEGGTLSVLRTKIKVKSLPLNLPEFVEVDLTPVKKGDQVTFKDIVLPDNVKLSEENENSVVLLVK.

It belongs to the bacterial ribosomal protein bL25 family. CTC subfamily. As to quaternary structure, part of the 50S ribosomal subunit; part of the 5S rRNA/L5/L18/L25 subcomplex. Contacts the 5S rRNA. Binds to the 5S rRNA independently of L5 and L18.

In terms of biological role, this is one of the proteins that binds to the 5S RNA in the ribosome where it forms part of the central protuberance. The sequence is that of Large ribosomal subunit protein bL25 from Borrelia hermsii (strain HS1 / DAH).